The sequence spans 54 residues: Large ribosomal subunit protein bL33 (54 aa).

The protein belongs to the bacterial ribosomal protein bL33 family.

This is Large ribosomal subunit protein bL33 from Chloroflexus aurantiacus (strain ATCC 29366 / DSM 635 / J-10-fl).